The primary structure comprises 352 residues: Small ribosomal subunit biogenesis GTPase RsgA 2 (352 aa).

The region spanning Arg-100–Leu-257 is the CP-type G domain. GTP-binding positions include Thr-147–Asp-150 and Gly-199–Thr-207. Residues Cys-278, Cys-283, His-285, and Cys-291 each coordinate Zn(2+).

This sequence belongs to the TRAFAC class YlqF/YawG GTPase family. RsgA subfamily. As to quaternary structure, monomer. Associates with 30S ribosomal subunit, binds 16S rRNA. Zn(2+) serves as cofactor.

It is found in the cytoplasm. One of several proteins that assist in the late maturation steps of the functional core of the 30S ribosomal subunit. Helps release RbfA from mature subunits. May play a role in the assembly of ribosomal proteins into the subunit. Circularly permuted GTPase that catalyzes slow GTP hydrolysis, GTPase activity is stimulated by the 30S ribosomal subunit. This Lactiplantibacillus plantarum (strain ATCC BAA-793 / NCIMB 8826 / WCFS1) (Lactobacillus plantarum) protein is Small ribosomal subunit biogenesis GTPase RsgA 2.